The chain runs to 333 residues: Large ribosomal subunit protein mL39 (333 aa).

A TGS domain is found at 56-122; that stretch reads DKIEVRYLGL…QESCTLQLLN (67 aa). The interval 311 to 333 is disordered; sequence SKKPSPARLPNEPFEEQQQLQLS.

This sequence belongs to the mitochondrion-specific ribosomal protein mL39 family. In terms of assembly, component of the mitochondrial ribosome large subunit (39S) which comprises a 16S rRNA and about 50 distinct proteins.

Its subcellular location is the mitochondrion. This is Large ribosomal subunit protein mL39 (mRpL39) from Drosophila melanogaster (Fruit fly).